The sequence spans 881 residues: MLEFPISVLLGCLVAVKAQTTFPNFESDVLNEHNKFRALHVDTAPLTWSDTLATYAQNYADQYDCSGVLTHSDGPYGENLALGYTDTGAVDAWYGEISKYNYSNPGFSESTGHFTQVVWKSTAEIGCGYKYCGTTWNNYIVCSYNPPGNYLGEFAEEVEPLISTVSSSSSSSSSTSTTSDTVSTISSSIMPAVAQGYTTTVSSAASSSSLKSTTINPAKTATLTASSSTVITSSTESVGSSTVSSASSSSVTTSYATSSSTVVSSDATSSTTTTSSVATSSSTTSSDPTSSTAAASSSDPASSSAAASSSASTENAASSSSAISSSSSMVSAPLSSTLTTSTASSRSVTSNSVNSVKFANTTVFSAQTTSSVSASLSSSVAADDIQGSTSKEATSSVSEHTSIVTSATNAAQYATRLGSSSRSSSGAVSSSAVSQSVLNSVIAVNTDVSVTSVSSTAHTTKDTATTSVTASESITSETAQASSSTEKNISNSAATSSSIYSNSASVSGHGVTYAAEYAITSEQSSALATSVPATNCSSIVKTTTLENSSTTTITAITKSTTTLATTANNSTRAATAVTIDPTLDPTDNSASPTDNAKHTSTYGSSSTGASLDSLRTTTSISVSSNTTQLVSTCTSESDYSDSPSFAISTATTTESNLITNTITASCSTDSNFPTSAASSTDETAFTRTISTSCSTLNGASTQTSELTTSPMKTNTVVPASSFPSTTTTCLENDDTAFSSIYTEVNAATIINPGETSSLASDFATSEKPNEPTSVKSTSNEGTSSTTTTYQQTVATLYAKPSSTSLGARTTTGSNGRSTTSQQDGSAMHQPTSSIYTQLKEGTSTTAKLSAYEGAATPLSIFQCNSLAGTIAAFVVAVLFAF.

An N-terminal signal peptide occupies residues 1-18; it reads MLEFPISVLLGCLVAVKA. An SCP domain is found at 30 to 144; sequence LNEHNKFRAL…TWNNYIVCSY (115 aa). N101 is a glycosylation site (N-linked (GlcNAc...) asparagine). Residues 262-313 form a disordered region; it reads VVSSDATSSTTTTSSVATSSSTTSSDPTSSTAAASSSDPASSSAAASSSAST. Residue N360 is glycosylated (N-linked (GlcNAc...) asparagine). Disordered stretches follow at residues 381 to 400 and 453 to 494; these read AADD…VSEH and VSST…NSAA. A compositionally biased stretch (polar residues) spans 386–400; sequence QGSTSKEATSSVSEH. N488, N535, N547, and N569 each carry an N-linked (GlcNAc...) asparagine glycan. A disordered region spans residues 579 to 611; sequence IDPTLDPTDNSASPTDNAKHTSTYGSSSTGASL. Polar residues predominate over residues 585-594; that stretch reads PTDNSASPTD. A compositionally biased stretch (low complexity) spans 599-611; it reads TSTYGSSSTGASL. N625 carries an N-linked (GlcNAc...) asparagine glycan. Disordered stretches follow at residues 758 to 788 and 800 to 830; these read LASD…TTTT and PSST…MHQP. Low complexity-rich tracts occupy residues 776–788 and 808–820; these read STSN…TTTT and RTTT…STTS. Residues 821–830 show a composition bias toward polar residues; that stretch reads QQDGSAMHQP. G853 carries the GPI-anchor amidated glycine lipid modification. The propeptide at 854 to 881 is removed in mature form; that stretch reads AATPLSIFQCNSLAGTIAAFVVAVLFAF.

It belongs to the CRISP family. The GPI-anchor is attached to the protein in the endoplasmic reticulum and serves to target the protein to the cell surface. There, the glucosamine-inositol phospholipid moiety is cleaved off and the GPI-modified mannoprotein is covalently attached via its lipidless GPI glycan remnant to the 1,6-beta-glucan of the outer cell wall layer.

It is found in the secreted. The protein resides in the cell wall. It localises to the membrane. Its function is as follows. The full-length isoform (isoform Long) is a daughter cell-specific cell wall protein required for efficient export of lipids such as acetylated sterols. Acts in detoxification of hydrophobic compounds. Involved in tolerance to organic solvents such as dimethyl sulfoxide (DMSO). Also plays a role as an inhibitor of mating. STE12 is utilized as a repressor of full-length PRY3 transcription, ensuring efficient mating. There is no evidence that production of the short PRY3 transcript (isoform Short) is anything more than an adventitious by-product of the mechanism responsible for the repression of the full-length transcript. Moreover, no disadvantage is detectable for cells unable to make the short transcript. This chain is Cell wall protein PRY3 (PRY3), found in Saccharomyces cerevisiae (strain ATCC 204508 / S288c) (Baker's yeast).